Here is a 362-residue protein sequence, read N- to C-terminus: Peptide chain release factor 1 (362 aa).

Q237 is subject to N5-methylglutamine. The span at 285–295 (EEKRHAEEAST) shows a compositional bias: basic and acidic residues. Residues 285 to 311 (EEKRHAEEASTRRNLLGSGDRSDRIRT) form a disordered region.

This sequence belongs to the prokaryotic/mitochondrial release factor family. In terms of processing, methylated by PrmC. Methylation increases the termination efficiency of RF1.

The protein localises to the cytoplasm. Peptide chain release factor 1 directs the termination of translation in response to the peptide chain termination codons UAG and UAA. This Photobacterium profundum (strain SS9) protein is Peptide chain release factor 1.